Reading from the N-terminus, the 328-residue chain is GMP reductase (328 aa).

Cys176 (thioimidate intermediate) is an active-site residue. 205 to 228 (IIADGGIRTHGDIAKSIRFGASMI) lines the NADP(+) pocket.

This sequence belongs to the IMPDH/GMPR family. GuaC type 2 subfamily.

The enzyme catalyses IMP + NH4(+) + NADP(+) = GMP + NADPH + 2 H(+). Functionally, catalyzes the irreversible NADPH-dependent deamination of GMP to IMP. It functions in the conversion of nucleobase, nucleoside and nucleotide derivatives of G to A nucleotides, and in maintaining the intracellular balance of A and G nucleotides. The chain is GMP reductase from Streptococcus pneumoniae (strain P1031).